A 181-amino-acid polypeptide reads, in one-letter code: MRYVLLGPPGAGKGTQAALLSEKLGVPHISTGDLFRANIGEGTPLGLEAKSYIDAGKLVPTDVTARMVEDRLNQDDAKDGFLLDGFPRTVQQADILEKLLSDKDLKLDGVLNFEVSEDVVVERMLARGRADDTEETIRTRLGVYREETFPLIEHYGDAIISIKAEGTVEEINERTLQAMGK.

Position 10–15 (10–15 (GAGKGT)) interacts with ATP. Residues 30 to 59 (STGDLFRANIGEGTPLGLEAKSYIDAGKLV) form an NMP region. Residues threonine 31, arginine 36, 57 to 59 (KLV), 85 to 88 (GFPR), and glutamine 92 contribute to the AMP site. Positions 126–132 (ARGRADD) are LID. Arginine 127 contacts ATP. 2 residues coordinate AMP: arginine 129 and arginine 140. Glycine 166 contributes to the ATP binding site.

Belongs to the adenylate kinase family. In terms of assembly, monomer.

Its subcellular location is the cytoplasm. It catalyses the reaction AMP + ATP = 2 ADP. It participates in purine metabolism; AMP biosynthesis via salvage pathway; AMP from ADP: step 1/1. Functionally, catalyzes the reversible transfer of the terminal phosphate group between ATP and AMP. Plays an important role in cellular energy homeostasis and in adenine nucleotide metabolism. The polypeptide is Adenylate kinase (Corynebacterium aurimucosum (strain ATCC 700975 / DSM 44827 / CIP 107346 / CN-1) (Corynebacterium nigricans)).